Here is a 406-residue protein sequence, read N- to C-terminus: Tryptophan synthase beta chain (406 aa).

N6-(pyridoxal phosphate)lysine is present on lysine 95.

Belongs to the TrpB family. In terms of assembly, tetramer of two alpha and two beta chains. Pyridoxal 5'-phosphate serves as cofactor.

The enzyme catalyses (1S,2R)-1-C-(indol-3-yl)glycerol 3-phosphate + L-serine = D-glyceraldehyde 3-phosphate + L-tryptophan + H2O. Its pathway is amino-acid biosynthesis; L-tryptophan biosynthesis; L-tryptophan from chorismate: step 5/5. Functionally, the beta subunit is responsible for the synthesis of L-tryptophan from indole and L-serine. This Azotobacter vinelandii (strain DJ / ATCC BAA-1303) protein is Tryptophan synthase beta chain.